Here is a 921-residue protein sequence, read N- to C-terminus: Protein translocase subunit SecA (921 aa).

ATP-binding positions include Q86, 104–108 (GEGKT), and D497. Low complexity predominate over residues 829-838 (QQAPQQQPQQ). The disordered stretch occupies residues 829–921 (QQAPQQQPQQ…CHGAIETQKA (93 aa)). A compositionally biased stretch (pro residues) spans 839–855 (VAPPPRPQPPQPAPQPP). Residues C901, C903, C912, and H913 each coordinate Zn(2+).

Belongs to the SecA family. As to quaternary structure, monomer and homodimer. Part of the essential Sec protein translocation apparatus which comprises SecA, SecYEG and auxiliary proteins SecDF-YajC and YidC. Zn(2+) serves as cofactor.

It is found in the cell inner membrane. The protein localises to the cytoplasm. It carries out the reaction ATP + H2O + cellular proteinSide 1 = ADP + phosphate + cellular proteinSide 2.. Its function is as follows. Part of the Sec protein translocase complex. Interacts with the SecYEG preprotein conducting channel. Has a central role in coupling the hydrolysis of ATP to the transfer of proteins into and across the cell membrane, serving both as a receptor for the preprotein-SecB complex and as an ATP-driven molecular motor driving the stepwise translocation of polypeptide chains across the membrane. The sequence is that of Protein translocase subunit SecA from Hyphomonas neptunium (strain ATCC 15444).